Consider the following 231-residue polypeptide: Large ribosomal subunit protein uL1 (231 aa).

This sequence belongs to the universal ribosomal protein uL1 family. Part of the 50S ribosomal subunit.

Its function is as follows. Binds directly to 23S rRNA. The L1 stalk is quite mobile in the ribosome, and is involved in E site tRNA release. In terms of biological role, protein L1 is also a translational repressor protein, it controls the translation of the L11 operon by binding to its mRNA. The chain is Large ribosomal subunit protein uL1 from Chlorobaculum tepidum (strain ATCC 49652 / DSM 12025 / NBRC 103806 / TLS) (Chlorobium tepidum).